A 318-amino-acid chain; its full sequence is Pseudouridine-5'-phosphate glycosidase 1 (318 aa).

Glu-29 acts as the Proton donor in catalysis. Substrate contacts are provided by Lys-90 and Val-110. Asp-142 is a binding site for Mn(2+). 144–146 (SAD) provides a ligand contact to substrate. Lys-163 functions as the Nucleophile in the catalytic mechanism.

Belongs to the pseudouridine-5'-phosphate glycosidase family. In terms of assembly, homotrimer. It depends on Mn(2+) as a cofactor.

It catalyses the reaction D-ribose 5-phosphate + uracil = psi-UMP + H2O. In terms of biological role, catalyzes the reversible cleavage of pseudouridine 5'-phosphate (PsiMP) to ribose 5-phosphate and uracil. Functions biologically in the cleavage direction, as part of a pseudouridine degradation pathway. The sequence is that of Pseudouridine-5'-phosphate glycosidase 1 from Photorhabdus laumondii subsp. laumondii (strain DSM 15139 / CIP 105565 / TT01) (Photorhabdus luminescens subsp. laumondii).